Here is a 180-residue protein sequence, read N- to C-terminus: Bifunctional protein PyrR (180 aa).

Residues T39–R40, D103–T111, and R136 each bind substrate. A PRPP-binding motif is present at residues V99–T111.

The protein belongs to the purine/pyrimidine phosphoribosyltransferase family. PyrR subfamily. As to quaternary structure, homodimer and homohexamer; in equilibrium.

The enzyme catalyses UMP + diphosphate = 5-phospho-alpha-D-ribose 1-diphosphate + uracil. Regulates transcriptional attenuation of the pyrimidine nucleotide (pyr) operon by binding in a uridine-dependent manner to specific sites on pyr mRNA. This disrupts an antiterminator hairpin in the RNA and favors formation of a downstream transcription terminator, leading to a reduced expression of downstream genes. Its function is as follows. Also displays a weak uracil phosphoribosyltransferase activity which is not physiologically significant. This chain is Bifunctional protein PyrR, found in Halalkalibacterium halodurans (strain ATCC BAA-125 / DSM 18197 / FERM 7344 / JCM 9153 / C-125) (Bacillus halodurans).